The primary structure comprises 206 residues: Pyridoxine/pyridoxamine 5'-phosphate oxidase (206 aa).

Residues 53–58 (RMVLLK), 68–69 (YT), Lys-75, and Gln-97 each bind FMN. Residue Lys-58 coordinates substrate. The substrate site is built by Tyr-115, Arg-119, and Ser-123. FMN contacts are provided by residues 132-133 (QS) and Trp-177. 183-185 (RLH) contacts substrate. Arg-187 contacts FMN.

This sequence belongs to the pyridoxamine 5'-phosphate oxidase family. In terms of assembly, homodimer. FMN is required as a cofactor.

It carries out the reaction pyridoxamine 5'-phosphate + O2 + H2O = pyridoxal 5'-phosphate + H2O2 + NH4(+). It catalyses the reaction pyridoxine 5'-phosphate + O2 = pyridoxal 5'-phosphate + H2O2. The protein operates within cofactor metabolism; pyridoxal 5'-phosphate salvage; pyridoxal 5'-phosphate from pyridoxamine 5'-phosphate: step 1/1. It participates in cofactor metabolism; pyridoxal 5'-phosphate salvage; pyridoxal 5'-phosphate from pyridoxine 5'-phosphate: step 1/1. In terms of biological role, catalyzes the oxidation of either pyridoxine 5'-phosphate (PNP) or pyridoxamine 5'-phosphate (PMP) into pyridoxal 5'-phosphate (PLP). This is Pyridoxine/pyridoxamine 5'-phosphate oxidase from Rhizobium meliloti (strain 1021) (Ensifer meliloti).